The following is a 497-amino-acid chain: NAD(P)H-quinone oxidoreductase chain 4, chloroplastic (497 aa).

A run of 14 helical transmembrane segments spans residues 5 to 25 (VPWL…IPIL), 36 to 56 (YTLG…YCHF), 88 to 108 (LGLV…AWPI), 112 to 132 (TRLF…LFVS), 135 to 155 (ILLF…LLCL), 168 to 188 (FVLY…TMSF), 212 to 232 (VLIY…FPFH), 243 to 263 (HYST…YGLI), 275 to 295 (FLLG…ASLI), 306 to 326 (IAYS…SFTE), 331 to 351 (GAIL…FLAG), 387 to 407 (LALP…GVVT), 418 to 438 (GITV…LSML), and 463 to 483 (LFIL…PNLI).

Belongs to the complex I subunit 4 family.

The protein resides in the plastid. It localises to the chloroplast thylakoid membrane. It catalyses the reaction a plastoquinone + NADH + (n+1) H(+)(in) = a plastoquinol + NAD(+) + n H(+)(out). The catalysed reaction is a plastoquinone + NADPH + (n+1) H(+)(in) = a plastoquinol + NADP(+) + n H(+)(out). This chain is NAD(P)H-quinone oxidoreductase chain 4, chloroplastic, found in Adiantum capillus-veneris (Maidenhair fern).